The sequence spans 632 residues: MAU2 chromatid cohesion factor homolog (632 aa).

2 TPR repeats span residues 453–486 (GGFYYVQGLHAFHKNSFHEAKRFLRETLKMANAE) and 493–526 (SCSLVLLSHVFLSIGNSKESMNMVTPAMQLASKI).

It belongs to the SCC4/mau-2 family. Interacts with Nipped-B to form the cohesin loading complex.

It localises to the nucleus. The protein resides in the nucleoplasm. In terms of biological role, required for association of the cohesin complex with chromatin during interphase. Plays a role in sister chromatid cohesion and normal progression through prometaphase. In Drosophila erecta (Fruit fly), this protein is MAU2 chromatid cohesion factor homolog.